Reading from the N-terminus, the 314-residue chain is Deoxymugineic acid synthase 1-D (314 aa).

The disordered stretch occupies residues 1–21; the sequence is MGAGEKTAAGMPRIGMGTAVQ. Asp44 contacts NADP(+). Tyr49 (proton donor) is an active-site residue. His112 contributes to the substrate binding site. NADP(+)-binding positions include 158–159, Gln180, 258–266, and 273–281; these read AN, FDEARMREN, and ELTEEERLR.

It belongs to the aldo/keto reductase family. Mostly expressed in root tissues, observed, at low levels, in mesocotyl and embryonic roots, seedling roots, crown and seedling leafes, mature bracts, anthers, pistil, caryopsis and embryos.

The catalysed reaction is 2'-deoxymugineate + NAD(+) = 3''-deamino-3''-oxonicotianamine + NADH + H(+). It catalyses the reaction 2'-deoxymugineate + NADP(+) = 3''-deamino-3''-oxonicotianamine + NADPH + H(+). It participates in siderophore biosynthesis. Its function is as follows. Catalyzes the reduction of a 3''-keto intermediate during the biosynthesis of 2'-deoxymugineic acid (DMA) from L-Met. Involved in the formation of phytosiderophores (MAs) belonging to the mugineic acid family and required to acquire iron. In Triticum aestivum (Wheat), this protein is Deoxymugineic acid synthase 1-D.